The chain runs to 2370 residues: Genome polyprotein (2370 aa).

G112 is lipidated: N-myristoyl glycine; by host. 2 disordered regions span residues V140–V173 and G704–P736. Low complexity predominate over residues G154–N171. Residues A713 to T725 show a composition bias toward polar residues. In terms of domain architecture, SF3 helicase spans Y1358–K1522. G1384–S1391 lines the ATP pocket. The N-myristoyl glycine; by host moiety is linked to residue G1597. Residues I1646–L1666 traverse the membrane as a helical segment. The tract at residues G1674 to S1696 is disordered. Y1676 is modified (O-(5'-phospho-RNA)-tyrosine). The Peptidase C3 domain occupies G1697 to V1886. Catalysis depends on for protease 3C activity residues H1745, E1776, and C1849. A compositionally biased stretch (polar residues) spans S2007–G2016. Residues S2007–D2026 are disordered. Residues S2122 to E2239 enclose the RdRp catalytic domain. Residues D2128 and D2225 each act as for RdRp activity in the active site.

As to quaternary structure, interacts with capsid protein VP1. Interacts with capsid protein VP3. In terms of assembly, interacts with capsid protein VP0. Interacts with capsid protein VP3. Interacts with capsid protein VP0. Interacts with capsid protein VP1. As to quaternary structure, homodimer. Interacts with protein 2B. Interacts with protein 2C. In terms of assembly, homodimer. Interacts with host ABCD3. Interacts with protein 2A. Interacts with host ACBD3. Homodimer. Interacts with host ABCD3. Interacts with protein 2A. Interacts with protein 3A. Interacts with protein 3C. Interacts with host ACBD3. As to quaternary structure, homodimer. Interacts with host ABCD3 (via GOLD domain) and PI4KB; these interactions allow the formation of a viral protein/ACBD3/PI4KB complex in order to synthesize PI4P at the viral RNA replication sites. Interacts with protein 2C. Interacts with protein 3C. Protein 3C: Interacts with protein 2A. Protein 3C: Interacts with protein 2C. In terms of processing, specific enzymatic cleavages by the viral protease in vivo yield a variety of precursors and mature proteins. The leader protein-VP0 junction is cleaved by 3C proteinase. The VP1/2A junction is cleaved by the protein 3CD in association with protein 2A. Uridylylated by the polymerase and is covalently linked to the 5'-end of genomic RNA. This uridylylated form acts as a nucleotide-peptide primer for the polymerase.

It localises to the virion. Its subcellular location is the host cytoplasm. The protein resides in the host cytoplasmic vesicle membrane. It is found in the host Golgi apparatus membrane. The catalysed reaction is RNA(n) + a ribonucleoside 5'-triphosphate = RNA(n+1) + diphosphate. It carries out the reaction Selective cleavage of Gln-|-Gly bond in the poliovirus polyprotein. In other picornavirus reactions Glu may be substituted for Gln, and Ser or Thr for Gly.. The enzyme catalyses ATP + H2O = ADP + phosphate + H(+). Its function is as follows. Required for viral RNA replication and viral RNA encapsidation. Does not have any proteolytic activity. Forms an icosahedral capsid of pseudo T=3 symmetry with capsid proteins VP0 and VP3. Together they form an icosahedral capsid composed of 60 copies of each VP0, VP1, and VP3. All the three latter proteins contain a beta-sheet structure called beta-barrel jelly roll. In terms of biological role, forms an icosahedral capsid of pseudo T=3 symmetry with capsid proteins VP1 and VP3. Together they form an icosahedral capsid composed of 60 copies of each VP0, VP1, and VP3. All the three latter proteins contain a beta-sheet structure called beta-barrel jelly roll. Functionally, forms an icosahedral capsid of pseudo T=3 symmetry with capsid proteins VP0 and VP1. Together they form an icosahedral capsid composed of 60 copies of each VP0, VP1, and VP3. All the three latter proteins contain a beta-sheet structure called beta-barrel jelly roll. Its function is as follows. Required for viral RNA replication. Does not have any proteolytic activity. Affects membrane integrity and causes an increase in membrane permeability. In terms of biological role, induces and associates with structural rearrangements of intracellular membranes. Displays RNA-binding, nucleotide binding and NTPase activities. May play a role in virion morphogenesis and viral RNA encapsidation by interacting with the capsid protein VP3. Functionally, serves as membrane anchor via its hydrophobic domain. Plays an essential role in viral RNA replication by recruiting PI4KB at the viral replication sites, thereby allowing the formation of rearranged membranous structures where viral replication takes place. Its function is as follows. Forms a primer, VPg-pU, which is utilized by the polymerase for the initiation of RNA chains. Cysteine protease that generates mature viral proteins from the precursor polyprotein. In addition to its proteolytic activity, it binds to viral RNA, and thus influences viral genome replication. RNA and substrate cooperatively bind to the protease. In terms of biological role, replicates the genomic and antigenomic RNAs by recognizing replications specific signals. Performs VPg uridylylation. The chain is Genome polyprotein from Homo sapiens (Human).